A 2784-amino-acid chain; its full sequence is Cilia- and flagella-associated protein 46 (2784 aa).

The stretch at 129-162 is one TPR 1 repeat; that stretch reads GLEVAAANQPRYQFLVYNASVHHWRVVAPLHRDG. Residues 242 to 268 are a coiled coil; sequence TAAAAKLTELQKDVARLQVHLATLAAA. One copy of the TPR 2 repeat lies at 401-434; it reads SLAPVVVAAHVKALEQLEDVLTTFTKLADVEGIH. Disordered regions lie at residues 543-562 and 581-607; these read SAEPANPEEEAVSLIERSKE and RDLPHPPPPAPTDPPGPDRDAAHAAAR. Positions 585–595 are enriched in pro residues; it reads HPPPPAPTDPP. Residues 644–665 adopt a coiled-coil conformation; the sequence is AVDREMVLLQAQLAHYEAEAAI. A disordered region spans residues 670-697; it reads RRRADISPPTRPSPPEVDGEGVRQPPAT. The stretch at 708 to 743 is one TPR 3 repeat; the sequence is ASVRSMRGAMSVNEPWLTLNNAVQLYNAALPLMQQH. Disordered stretches follow at residues 799 to 837 and 929 to 954; these read DAGQELEDDDDEDSLDEDGNPPPAGDAGPHFNRRSPAYK and RVNEEKQPAGAGAEKGGGDKGRKPHG. Positions 802 to 817 are enriched in acidic residues; the sequence is QELEDDDDEDSLDEDG. The TPR 4 repeat unit spans residues 976-1009; that stretch reads LELWAKMARAVADAGVWPAALECSAAALAALPGA. Over residues 1275-1288 the composition is skewed to acidic residues; it reads TGDLDGDGTDDEDD. Disordered stretches follow at residues 1275 to 1351 and 1640 to 1673; these read TGDL…RVPE and AAGGGRGGRESPSPHDDGIHYIGGPAPGDSHGQL. The span at 1298–1311 shows a compositional bias: gly residues; sequence SGGGSSSGRAGGGF. Residues 1646 to 1658 show a composition bias toward basic and acidic residues; that stretch reads GGRESPSPHDDGI. 2 TPR repeats span residues 1712-1745 and 1854-1886; these read HDVWLKKGDYLLRRGHYAAARQLLSRARAHAADC and MEMLRGQGVSTWRKSYDGAVTLVNQAIMALAAR. Residues 1961-1984 are a coiled coil; that stretch reads RLAEVQLAAAEERERLAGADREKA. Disordered regions lie at residues 2068 to 2112, 2278 to 2303, 2346 to 2389, and 2441 to 2465; these read RPFV…EAAA, ATAEPTPPLNAEKSKKKTDASAPAAA, AAKG…PGAA, and LPLPPPGSPDGKKEKKDKKEAAGPT. The span at 2069-2083 shows a compositional bias: pro residues; the sequence is PFVPPPKPPGAPKRP. The span at 2087-2096 shows a compositional bias: acidic residues; the sequence is AEEEEDEEGP. Positions 2097–2112 are enriched in low complexity; it reads DTAAADAAAEAAEAAA. Over residues 2378–2389 the composition is skewed to low complexity; it reads SKQGPKSGPGAA. A compositionally biased stretch (basic and acidic residues) spans 2450–2461; it reads DGKKEKKDKKEA. A TPR 7 repeat occupies 2613–2646; that stretch reads ATGGPCTGLLFLGVGRFAAHVPPAVLASAPLGGC.

This sequence belongs to the CFAP46 family. As to quaternary structure, part of the PDCP1 complex composed of CFAP46, CFAP54, CFAP74 and CFAP221; the PDCP1 complex binds calmodulin.

The protein resides in the cytoplasm. Its subcellular location is the cytoskeleton. It is found in the cilium axoneme. Its function is as follows. As part of the central apparatus of the cilium axoneme plays a role in cilium movement and thereby cell motility. The sequence is that of Cilia- and flagella-associated protein 46 from Chlamydomonas reinhardtii (Chlamydomonas smithii).